A 445-amino-acid polypeptide reads, in one-letter code: Glutamate-1-semialdehyde 2,1-aminomutase (445 aa).

At Lys-264 the chain carries N6-(pyridoxal phosphate)lysine.

The protein belongs to the class-III pyridoxal-phosphate-dependent aminotransferase family. HemL subfamily. Requires pyridoxal 5'-phosphate as cofactor.

The protein localises to the cytoplasm. The catalysed reaction is (S)-4-amino-5-oxopentanoate = 5-aminolevulinate. It functions in the pathway porphyrin-containing compound metabolism; protoporphyrin-IX biosynthesis; 5-aminolevulinate from L-glutamyl-tRNA(Glu): step 2/2. This Halobacterium salinarum (strain ATCC 29341 / DSM 671 / R1) protein is Glutamate-1-semialdehyde 2,1-aminomutase.